Reading from the N-terminus, the 211-residue chain is Protein-L-isoaspartate O-methyltransferase (211 aa).

Serine 62 is an active-site residue.

This sequence belongs to the methyltransferase superfamily. L-isoaspartyl/D-aspartyl protein methyltransferase family.

The protein localises to the cytoplasm. The catalysed reaction is [protein]-L-isoaspartate + S-adenosyl-L-methionine = [protein]-L-isoaspartate alpha-methyl ester + S-adenosyl-L-homocysteine. In terms of biological role, catalyzes the methyl esterification of L-isoaspartyl residues in peptides and proteins that result from spontaneous decomposition of normal L-aspartyl and L-asparaginyl residues. It plays a role in the repair and/or degradation of damaged proteins. This Shewanella sp. (strain MR-4) protein is Protein-L-isoaspartate O-methyltransferase.